The primary structure comprises 387 residues: S-adenosylmethionine synthase (387 aa).

His-19 lines the ATP pocket. Residue Asp-21 participates in Mg(2+) binding. Glu-47 is a binding site for K(+). Gln-103 is a binding site for L-methionine. Positions 103-113 are flexible loop; it reads QSPDIAQGVEL. Residues 167-169, 233-234, Asp-242, 248-249, Ala-265, and Lys-269 each bind ATP; these read DMK, RF, and RK. Residue Asp-242 coordinates L-methionine. Position 273 (Lys-273) interacts with L-methionine.

It belongs to the AdoMet synthase family. Homotetramer; dimer of dimers. The cofactor is Mg(2+). Requires K(+) as cofactor.

The protein resides in the cytoplasm. It carries out the reaction L-methionine + ATP + H2O = S-adenosyl-L-methionine + phosphate + diphosphate. It functions in the pathway amino-acid biosynthesis; S-adenosyl-L-methionine biosynthesis; S-adenosyl-L-methionine from L-methionine: step 1/1. Its function is as follows. Catalyzes the formation of S-adenosylmethionine (AdoMet) from methionine and ATP. The overall synthetic reaction is composed of two sequential steps, AdoMet formation and the subsequent tripolyphosphate hydrolysis which occurs prior to release of AdoMet from the enzyme. This is S-adenosylmethionine synthase from Mycoplasma mycoides subsp. mycoides SC (strain CCUG 32753 / NCTC 10114 / PG1).